The primary structure comprises 344 residues: tRNA (guanine(26)-N(2))-dimethyltransferase (344 aa).

Residues 1–334 enclose the Trm1 methyltransferase domain; the sequence is MIVREGSAEI…ASCDLVESLM (334 aa). S-adenosyl-L-methionine is bound by residues arginine 35, arginine 60, and glutamate 76.

It belongs to the class I-like SAM-binding methyltransferase superfamily. Trm1 family.

The catalysed reaction is guanosine(26) in tRNA + 2 S-adenosyl-L-methionine = N(2)-dimethylguanosine(26) in tRNA + 2 S-adenosyl-L-homocysteine + 2 H(+). Its function is as follows. Dimethylates a single guanine residue at position 26 of a number of tRNAs using S-adenosyl-L-methionine as donor of the methyl groups. The polypeptide is tRNA (guanine(26)-N(2))-dimethyltransferase (Thermoplasma acidophilum (strain ATCC 25905 / DSM 1728 / JCM 9062 / NBRC 15155 / AMRC-C165)).